The chain runs to 270 residues: tRNA pseudouridine synthase A (270 aa).

Catalysis depends on Asp60, which acts as the Nucleophile. The interval 107 to 111 (FHARF) is RNA binding. Substrate is bound at residue Tyr118. Residues 168 to 172 (QCQSR) form an interaction with tRNA region.

The protein belongs to the tRNA pseudouridine synthase TruA family. Homodimer.

The enzyme catalyses uridine(38/39/40) in tRNA = pseudouridine(38/39/40) in tRNA. Functionally, formation of pseudouridine at positions 38, 39 and 40 in the anticodon stem and loop of transfer RNAs. This chain is tRNA pseudouridine synthase A, found in Escherichia coli (strain K12 / DH10B).